The sequence spans 93 residues: U12-lycotoxin-Ls1e (93 aa).

Residues 1 to 18 (MKFAVILLFTLVVLAVAS) form the signal peptide. Residues 19–38 (ESVEEDTREIDVEEFQEQQR) constitute a propeptide that is removed on maturation.

Belongs to the neurotoxin 31 family. In terms of processing, contains 5 disulfide bonds. In terms of tissue distribution, expressed by the venom gland.

Its subcellular location is the secreted. The protein is U12-lycotoxin-Ls1e of Lycosa singoriensis (Wolf spider).